The chain runs to 370 residues: Thiamine-repressible mitochondrial transport protein THI74 (370 aa).

Topologically, residues 1 to 10 are cytoplasmic; sequence MNRVGIDVDH. Residues 11-31 form a helical membrane-spanning segment; the sequence is MIGVLLLAVVVVFWVGASCLT. Over 32–42 the chain is Mitochondrial intermembrane; that stretch reads NELLETNAYNK. Residues 43 to 63 traverse the membrane as a helical segment; sequence PFFLTYLNISSFALYLTPDLW. Over 64 to 119 the chain is Cytoplasmic; it reads RIIQSRRKSLQERTERTLPIHTQESFSEFLPLLSSTPSTSSNLSSIADTKVKDTMR. The helical transmembrane segment at 120 to 140 threads the bilayer; that stretch reads LSLLFCVLWFVANLAANAALS. Residues 129-190 enclose the EamA domain; that stretch reads FVANLAANAA…SLFGIILIVM (62 aa). Topologically, residues 141–146 are mitochondrial intermembrane; the sequence is YTTVAS. The chain crosses the membrane as a helical span at residues 147-167; the sequence is STILSSTSSFFTLFLATSLGI. Residues 168–169 are Cytoplasmic-facing; sequence ET. Residues 170-190 form a helical membrane-spanning segment; it reads FSTKKLLGLFVSLFGIILIVM. Residues 191-203 are Mitochondrial intermembrane-facing; it reads QSSKQQDSVSASS. A helical transmembrane segment spans residues 204–224; the sequence is FLVGNTLALLGSLGYSVYTTL. Over 225-239 the chain is Cytoplasmic; sequence LKYEISSKGLRLDIQ. The chain crosses the membrane as a helical span at residues 240–260; the sequence is MFLGYVGIFTFLLFWPILIIL. Topologically, residues 261–273 are mitochondrial intermembrane; that stretch reads DITHMETFELPSN. A helical transmembrane segment spans residues 274–294; sequence FHISFLVMLNCIIIFVSDYFW. Residues 295–303 lie on the Cytoplasmic side of the membrane; it reads CKALILTSP. A helical transmembrane segment spans residues 304-324; that stretch reads LVVTVALTFTIPLAMFADFVW. The Mitochondrial intermembrane portion of the chain corresponds to 325–326; that stretch reads RE. Residues 327 to 347 form a helical membrane-spanning segment; that stretch reads AFFTPWYIIGVIFIFVSFFLV. Residues 348-370 lie on the Cytoplasmic side of the membrane; it reads NHRGESAVEKDCAAVEKGPILDA.

It is found in the mitochondrion membrane. May be involved in thiaminediphosphate transport across the mitochondrial membrane. The chain is Thiamine-repressible mitochondrial transport protein THI74 (THI74) from Saccharomyces cerevisiae (strain ATCC 204508 / S288c) (Baker's yeast).